Consider the following 1823-residue polypeptide: THO complex subunit 2 (1823 aa).

Positions Asn935 to Thr1003 form a coiled coil. Positions Lys964–Lys969 match the Nuclear localization signal motif. 2 disordered regions span residues Leu1244–Asn1382 and Ala1394–Glu1823. Composition is skewed to basic and acidic residues over residues Gln1272 to Thr1283, Lys1312 to Pro1330, and Ala1356 to Ser1367. Positions Ala1394–Ser1409 are enriched in polar residues. Residues Pro1432–His1596 show a composition bias toward basic and acidic residues. Residues Leu1600–Ile1610 show a composition bias toward pro residues. Basic and acidic residues-rich tracts occupy residues Ala1616 to Ala1625, Pro1636 to Glu1648, Asp1655 to Ser1706, and Leu1768 to Ala1785. Residues Ser1646 and Ser1696 each carry the phosphoserine modification. Over residues Met1802 to Ser1816 the composition is skewed to polar residues.

Belongs to the THOC2 family. As to quaternary structure, component of the THO complex, which is composed of THO1, THO2, THO3, THO5, THO6 and THO7.

It localises to the nucleus. Functionally, acts as a component of the THO subcomplex of the TREX complex which is thought to couple mRNA transcription, processing and nuclear export. The sequence is that of THO complex subunit 2 (THO2) from Arabidopsis thaliana (Mouse-ear cress).